The following is a 349-amino-acid chain: Divinyl chlorophyll a/b light-harvesting protein PcbE (349 aa).

Transmembrane regions (helical) follow at residues 27–47, 65–85, 88–108, 201–221, 241–261, and 308–328; these read FIAA…GSTL, IFLA…AWTG, VASI…GGLL, VLGG…FHIA, AILS…AFWC, and LANV…WHAL.

Belongs to the PsbB/PsbC family. IsiA/Pcb subfamily. The antenna complex consists of divinyl chlorophylls (a and b) and divinyl chlorophyll a/b binding proteins and binds more divinyl chlorophyll b than does the antenna complex from high-light-adapted Prochlorococcus. Requires divinyl chlorophyll a as cofactor. The cofactor is divinyl chlorophyll b.

It localises to the cellular thylakoid membrane. Functionally, the antenna complex functions as a light receptor, it captures and delivers excitation energy to photosystems II and I. The Prochlorales pcb genes are not related to higher plant LHCs. This is Divinyl chlorophyll a/b light-harvesting protein PcbE (pcbE) from Prochlorococcus marinus (strain NATL2A).